Consider the following 338-residue polypeptide: F420-dependent glucose-6-phosphate dehydrogenase (338 aa).

D40 lines the coenzyme F420-(gamma-Glu)n pocket. Residue H41 is the Proton donor of the active site. Coenzyme F420-(gamma-Glu)n is bound by residues T77 and 108–109 (TG). E110 (proton acceptor) is an active-site residue. Residues N113, 178 to 179 (GG), and 181 to 182 (VV) each bind coenzyme F420-(gamma-Glu)n. Substrate contacts are provided by T196, K199, K260, and R284.

This sequence belongs to the F420-dependent glucose-6-phosphate dehydrogenase family. As to quaternary structure, homodimer.

The enzyme catalyses oxidized coenzyme F420-(gamma-L-Glu)(n) + D-glucose 6-phosphate + H(+) = 6-phospho-D-glucono-1,5-lactone + reduced coenzyme F420-(gamma-L-Glu)(n). Catalyzes the coenzyme F420-dependent oxidation of glucose 6-phosphate (G6P) to 6-phosphogluconolactone. This chain is F420-dependent glucose-6-phosphate dehydrogenase, found in Gordonia bronchialis (strain ATCC 25592 / DSM 43247 / BCRC 13721 / JCM 3198 / KCTC 3076 / NBRC 16047 / NCTC 10667) (Rhodococcus bronchialis).